Here is a 444-residue protein sequence, read N- to C-terminus: UDP-N-acetylmuramate--L-alanine ligase (444 aa).

An ATP-binding site is contributed by 110–116 (GAHGKTS).

It belongs to the MurCDEF family.

The protein resides in the cytoplasm. The enzyme catalyses UDP-N-acetyl-alpha-D-muramate + L-alanine + ATP = UDP-N-acetyl-alpha-D-muramoyl-L-alanine + ADP + phosphate + H(+). Its pathway is cell wall biogenesis; peptidoglycan biosynthesis. Cell wall formation. The protein is UDP-N-acetylmuramate--L-alanine ligase of Streptococcus pneumoniae (strain ATCC 700669 / Spain 23F-1).